Consider the following 371-residue polypeptide: Pyruvate dehydrogenase E1 component subunit alpha (371 aa).

As to quaternary structure, heterodimer of an alpha and a beta chain. Thiamine diphosphate is required as a cofactor.

The enzyme catalyses N(6)-[(R)-lipoyl]-L-lysyl-[protein] + pyruvate + H(+) = N(6)-[(R)-S(8)-acetyldihydrolipoyl]-L-lysyl-[protein] + CO2. With respect to regulation, activity of the E1 module is inhibited by the pyruvate dehydrogenase inhibitor PdhI. Its function is as follows. The pyruvate dehydrogenase complex catalyzes the overall conversion of pyruvate to acetyl-CoA and CO(2). It contains multiple copies of three enzymatic components: pyruvate dehydrogenase (E1), dihydrolipoamide acetyltransferase (E2) and lipoamide dehydrogenase (E3). Functionally, the B.subtilis PDH complex also possesses branched-chain 2-oxoacid dehydrogenase (BCDH) activity. The chain is Pyruvate dehydrogenase E1 component subunit alpha from Bacillus subtilis (strain 168).